A 221-amino-acid polypeptide reads, in one-letter code: uncharacterized protein (221 aa).

5 consecutive transmembrane segments (helical) span residues 2 to 22 (FIAK…FFFV), 34 to 54 (LLTL…LAQA), 97 to 117 (AYGL…SNVI), 131 to 151 (ALDQ…FMGI), and 177 to 197 (ILWP…LQVI).

It belongs to the peroxisomal membrane protein PXMP2/4 family.

The protein resides in the membrane. This is an uncharacterized protein from Schizosaccharomyces pombe (strain 972 / ATCC 24843) (Fission yeast).